The following is a 191-amino-acid chain: Peptidyl-tRNA hydrolase (191 aa).

Y14 contacts tRNA. H19 functions as the Proton acceptor in the catalytic mechanism. TRNA contacts are provided by Y64, N66, and N112.

Belongs to the PTH family. Monomer.

Its subcellular location is the cytoplasm. The catalysed reaction is an N-acyl-L-alpha-aminoacyl-tRNA + H2O = an N-acyl-L-amino acid + a tRNA + H(+). In terms of biological role, hydrolyzes ribosome-free peptidyl-tRNAs (with 1 or more amino acids incorporated), which drop off the ribosome during protein synthesis, or as a result of ribosome stalling. Functionally, catalyzes the release of premature peptidyl moieties from peptidyl-tRNA molecules trapped in stalled 50S ribosomal subunits, and thus maintains levels of free tRNAs and 50S ribosomes. In Clostridium beijerinckii (strain ATCC 51743 / NCIMB 8052) (Clostridium acetobutylicum), this protein is Peptidyl-tRNA hydrolase.